The primary structure comprises 387 residues: Succinate--CoA ligase [ADP-forming] subunit beta (387 aa).

The region spanning 9-245 is the ATP-grasp domain; sequence KDLLESYGLK…KSQENAKELK (237 aa). ATP contacts are provided by residues Lys46, 53-55, Glu100, Tyr103, and Glu108; that span reads GRG. Mg(2+)-binding residues include Asn200 and Asp214. Substrate-binding positions include Asn265 and 322–324; that span reads GIV.

The protein belongs to the succinate/malate CoA ligase beta subunit family. As to quaternary structure, heterotetramer of two alpha and two beta subunits. Requires Mg(2+) as cofactor.

It catalyses the reaction succinate + ATP + CoA = succinyl-CoA + ADP + phosphate. It carries out the reaction GTP + succinate + CoA = succinyl-CoA + GDP + phosphate. It participates in carbohydrate metabolism; tricarboxylic acid cycle; succinate from succinyl-CoA (ligase route): step 1/1. In terms of biological role, succinyl-CoA synthetase functions in the citric acid cycle (TCA), coupling the hydrolysis of succinyl-CoA to the synthesis of either ATP or GTP and thus represents the only step of substrate-level phosphorylation in the TCA. The beta subunit provides nucleotide specificity of the enzyme and binds the substrate succinate, while the binding sites for coenzyme A and phosphate are found in the alpha subunit. The protein is Succinate--CoA ligase [ADP-forming] subunit beta of Francisella tularensis subsp. tularensis (strain FSC 198).